The sequence spans 506 residues: Lysine--tRNA ligase (506 aa).

Glu-416 and Glu-423 together coordinate Mg(2+).

It belongs to the class-II aminoacyl-tRNA synthetase family. As to quaternary structure, homodimer. The cofactor is Mg(2+).

It is found in the cytoplasm. The catalysed reaction is tRNA(Lys) + L-lysine + ATP = L-lysyl-tRNA(Lys) + AMP + diphosphate. In Bordetella parapertussis (strain 12822 / ATCC BAA-587 / NCTC 13253), this protein is Lysine--tRNA ligase.